An 89-amino-acid polypeptide reads, in one-letter code: Small ribosomal subunit protein uS15 (89 aa).

The protein belongs to the universal ribosomal protein uS15 family. In terms of assembly, part of the 30S ribosomal subunit. Forms a bridge to the 50S subunit in the 70S ribosome, contacting the 23S rRNA.

Functionally, one of the primary rRNA binding proteins, it binds directly to 16S rRNA where it helps nucleate assembly of the platform of the 30S subunit by binding and bridging several RNA helices of the 16S rRNA. In terms of biological role, forms an intersubunit bridge (bridge B4) with the 23S rRNA of the 50S subunit in the ribosome. The protein is Small ribosomal subunit protein uS15 of Rhizobium etli (strain CIAT 652).